The sequence spans 415 residues: Serine hydroxymethyltransferase (415 aa).

Residues Leu117 and 121 to 123 (GHL) contribute to the (6S)-5,6,7,8-tetrahydrofolate site. Lys226 is subject to N6-(pyridoxal phosphate)lysine. (6S)-5,6,7,8-tetrahydrofolate-binding positions include Glu241 and 349–351 (SPF).

The protein belongs to the SHMT family. In terms of assembly, homodimer. The cofactor is pyridoxal 5'-phosphate.

It is found in the cytoplasm. It carries out the reaction (6R)-5,10-methylene-5,6,7,8-tetrahydrofolate + glycine + H2O = (6S)-5,6,7,8-tetrahydrofolate + L-serine. It participates in one-carbon metabolism; tetrahydrofolate interconversion. The protein operates within amino-acid biosynthesis; glycine biosynthesis; glycine from L-serine: step 1/1. Catalyzes the reversible interconversion of serine and glycine with tetrahydrofolate (THF) serving as the one-carbon carrier. This reaction serves as the major source of one-carbon groups required for the biosynthesis of purines, thymidylate, methionine, and other important biomolecules. Also exhibits THF-independent aldolase activity toward beta-hydroxyamino acids, producing glycine and aldehydes, via a retro-aldol mechanism. The protein is Serine hydroxymethyltransferase of Geotalea daltonii (strain DSM 22248 / JCM 15807 / FRC-32) (Geobacter daltonii).